The sequence spans 310 residues: Methionyl-tRNA formyltransferase (310 aa).

109 to 112 (SLLP) contributes to the (6S)-5,6,7,8-tetrahydrofolate binding site.

This sequence belongs to the Fmt family.

It carries out the reaction L-methionyl-tRNA(fMet) + (6R)-10-formyltetrahydrofolate = N-formyl-L-methionyl-tRNA(fMet) + (6S)-5,6,7,8-tetrahydrofolate + H(+). Its function is as follows. Attaches a formyl group to the free amino group of methionyl-tRNA(fMet). The formyl group appears to play a dual role in the initiator identity of N-formylmethionyl-tRNA by promoting its recognition by IF2 and preventing the misappropriation of this tRNA by the elongation apparatus. This chain is Methionyl-tRNA formyltransferase, found in Pseudomonas putida (strain ATCC 700007 / DSM 6899 / JCM 31910 / BCRC 17059 / LMG 24140 / F1).